A 121-amino-acid polypeptide reads, in one-letter code: Aspartate 1-decarboxylase (121 aa).

Serine 25 (schiff-base intermediate with substrate; via pyruvic acid) is an active-site residue. Serine 25 is subject to Pyruvic acid (Ser). Threonine 57 is a binding site for substrate. The active-site Proton donor is the tyrosine 58. A substrate-binding site is contributed by glycine 73–alanine 75.

The protein belongs to the PanD family. Heterooctamer of four alpha and four beta subunits. The cofactor is pyruvate. Post-translationally, is synthesized initially as an inactive proenzyme, which is activated by self-cleavage at a specific serine bond to produce a beta-subunit with a hydroxyl group at its C-terminus and an alpha-subunit with a pyruvoyl group at its N-terminus.

It localises to the cytoplasm. It carries out the reaction L-aspartate + H(+) = beta-alanine + CO2. The protein operates within cofactor biosynthesis; (R)-pantothenate biosynthesis; beta-alanine from L-aspartate: step 1/1. Functionally, catalyzes the pyruvoyl-dependent decarboxylation of aspartate to produce beta-alanine. The polypeptide is Aspartate 1-decarboxylase (Maricaulis maris (strain MCS10) (Caulobacter maris)).